Reading from the N-terminus, the 160-residue chain is SsrA-binding protein (160 aa).

Belongs to the SmpB family.

Its subcellular location is the cytoplasm. In terms of biological role, required for rescue of stalled ribosomes mediated by trans-translation. Binds to transfer-messenger RNA (tmRNA), required for stable association of tmRNA with ribosomes. tmRNA and SmpB together mimic tRNA shape, replacing the anticodon stem-loop with SmpB. tmRNA is encoded by the ssrA gene; the 2 termini fold to resemble tRNA(Ala) and it encodes a 'tag peptide', a short internal open reading frame. During trans-translation Ala-aminoacylated tmRNA acts like a tRNA, entering the A-site of stalled ribosomes, displacing the stalled mRNA. The ribosome then switches to translate the ORF on the tmRNA; the nascent peptide is terminated with the 'tag peptide' encoded by the tmRNA and targeted for degradation. The ribosome is freed to recommence translation, which seems to be the essential function of trans-translation. The sequence is that of SsrA-binding protein from Enterobacter sp. (strain 638).